A 283-amino-acid chain; its full sequence is Arsenite methyltransferase (283 aa).

It belongs to the methyltransferase superfamily. Arsenite methyltransferase family.

The catalysed reaction is arsenic triglutathione + [thioredoxin]-dithiol + S-adenosyl-L-methionine + 2 H2O = methylarsonous acid + [thioredoxin]-disulfide + 3 glutathione + S-adenosyl-L-homocysteine + H(+). The enzyme catalyses arsenic triglutathione + 2 [thioredoxin]-dithiol + 2 S-adenosyl-L-methionine + H2O = dimethylarsinous acid + 2 [thioredoxin]-disulfide + 3 glutathione + 2 S-adenosyl-L-homocysteine + 2 H(+). It carries out the reaction arsenic triglutathione + 3 [thioredoxin]-dithiol + 3 S-adenosyl-L-methionine = trimethylarsine + 3 [thioredoxin]-disulfide + 3 glutathione + 3 S-adenosyl-L-homocysteine + 3 H(+). In terms of biological role, catalyzes the transfer of a methyl group from AdoMet to arsenite, producing methylated arsenicals. Involved in the conversion of As(III) to a number of di- and trimethylated species, with trimethylarsine as the end product. Reduces the arsenic toxicity in the cell and may contribute to the global arsenic cycling. This chain is Arsenite methyltransferase, found in Rhodopseudomonas palustris (strain ATCC BAA-98 / CGA009).